A 264-amino-acid chain; its full sequence is Flagellar basal-body rod protein FlgG (264 aa).

Belongs to the flagella basal body rod proteins family. In terms of assembly, the basal body constitutes a major portion of the flagellar organelle and consists of four rings (L,P,S, and M) mounted on a central rod. The rod consists of about 26 subunits of FlgG in the distal portion, and FlgB, FlgC and FlgF are thought to build up the proximal portion of the rod with about 6 subunits each.

It is found in the bacterial flagellum basal body. The protein is Flagellar basal-body rod protein FlgG (flgG) of Bacillus subtilis (strain 168).